Reading from the N-terminus, the 218-residue chain is Elongation factor Ts (218 aa).

The tract at residues 82–85 is involved in Mg(2+) ion dislocation from EF-Tu; that stretch reads TDFV.

Belongs to the EF-Ts family.

Its subcellular location is the cytoplasm. Associates with the EF-Tu.GDP complex and induces the exchange of GDP to GTP. It remains bound to the aminoacyl-tRNA.EF-Tu.GTP complex up to the GTP hydrolysis stage on the ribosome. The protein is Elongation factor Ts of Prochlorococcus marinus (strain MIT 9215).